A 952-amino-acid chain; its full sequence is UvrABC system protein A (952 aa).

38–45 serves as a coordination point for ATP; it reads GLSGSGKS. Residues 258 to 285 form a C4-type zinc finger; the sequence is CNECGFSIPELEPRFFSFNSPVGACKSC. ABC transporter domains follow at residues 315 to 596 and 616 to 945; these read FRSV…KKSI and GNGK…LFLE. 648 to 655 is an ATP binding site; that stretch reads GVSGSGKS. The segment at 747–773 adopts a C4-type zinc-finger fold; it reads CENCSGDGLIKIEMHFLPDVFVKCESC.

It belongs to the ABC transporter superfamily. UvrA family. In terms of assembly, forms a heterotetramer with UvrB during the search for lesions.

It is found in the cytoplasm. In terms of biological role, the UvrABC repair system catalyzes the recognition and processing of DNA lesions. UvrA is an ATPase and a DNA-binding protein. A damage recognition complex composed of 2 UvrA and 2 UvrB subunits scans DNA for abnormalities. When the presence of a lesion has been verified by UvrB, the UvrA molecules dissociate. The polypeptide is UvrABC system protein A (Malacoplasma penetrans (strain HF-2) (Mycoplasma penetrans)).